The sequence spans 350 residues: Protein memo-1 homolog (350 aa).

The protein belongs to the MEMO1 family. Interacts with rho-1. In terms of tissue distribution, expressed in neuronal and non-neuronal cells in the head and tail, pharyngeal cells, spermatheca, distal tip cells, anchor cell and the intestine.

In terms of biological role, plays a role in the oxidative stress response and the maintenance of longevity by regulating the interaction between GTPase rho-1 and oxidase bli-3. In turn, this serves to modulate bli-3 activity and the control of reactive oxygen species production. May control cell migration by relaying extracellular chemotactic signals to the microtubule cytoskeleton. This chain is Protein memo-1 homolog, found in Caenorhabditis elegans.